The sequence spans 419 residues: Creatine kinase S-type, mitochondrial (419 aa).

The N-terminal 39 residues, 1–39, are a transit peptide targeting the mitochondrion; the sequence is MASAFSKLLTGRNASLLFTTLGTSALTTGYLLNRQKVSA. The interval 40–64 is cardiolipin-binding; the sequence is DAREQHKLFPPSADYPDLRKHNNCM. One can recognise a Phosphagen kinase N-terminal domain in the interval 46–132; sequence KLFPPSADYP…FDPVIKLRHN (87 aa). Residues 159–401 form the Phosphagen kinase C-terminal domain; the sequence is YVLSSRVRTG…NYLVDCEKKL (243 aa). ATP contacts are provided by residues 162–166 and H225; that span reads SSRVR. Y255 carries the post-translational modification Phosphotyrosine. Residues R270, R326, 354-359, and D369 contribute to the ATP site; that span reads RGTGGV. T356 carries the post-translational modification Phosphothreonine.

The protein belongs to the ATP:guanido phosphotransferase family. In terms of assembly, exists as an octamer composed of four CKMT2 homodimers. In terms of tissue distribution, sarcomere-specific. Found only in heart and skeletal muscles.

The protein localises to the mitochondrion inner membrane. It catalyses the reaction creatine + ATP = N-phosphocreatine + ADP + H(+). In terms of biological role, reversibly catalyzes the transfer of phosphate between ATP and various phosphogens (e.g. creatine phosphate). Creatine kinase isoenzymes play a central role in energy transduction in tissues with large, fluctuating energy demands, such as skeletal muscle, heart, brain and spermatozoa. The chain is Creatine kinase S-type, mitochondrial (Ckmt2) from Rattus norvegicus (Rat).